The chain runs to 428 residues: Tyrosine--tRNA ligase (428 aa).

Residue Y41 participates in L-tyrosine binding. The 'HIGH' region signature appears at 46–55 (PTADSLHLGH). Y179 and Q183 together coordinate L-tyrosine. The 'KMSKS' region signature appears at 239–243 (KFGKT). An ATP-binding site is contributed by K242. The S4 RNA-binding domain maps to 361-418 (TDLMQALVDAELQPSRGQARKTIASNAVTINGEKQSDPEYIFNDEDRLFGRYTLLRRG).

It belongs to the class-I aminoacyl-tRNA synthetase family. TyrS type 1 subfamily. Homodimer.

Its subcellular location is the cytoplasm. It carries out the reaction tRNA(Tyr) + L-tyrosine + ATP = L-tyrosyl-tRNA(Tyr) + AMP + diphosphate + H(+). Functionally, catalyzes the attachment of tyrosine to tRNA(Tyr) in a two-step reaction: tyrosine is first activated by ATP to form Tyr-AMP and then transferred to the acceptor end of tRNA(Tyr). In Salmonella arizonae (strain ATCC BAA-731 / CDC346-86 / RSK2980), this protein is Tyrosine--tRNA ligase.